Consider the following 697-residue polypeptide: Phenylalanine--tRNA ligase beta subunit, chloroplastic (697 aa).

The B5 domain occupies Asn-283 to Ser-368. Residues Asp-346, Asp-352, Glu-355, and Glu-356 each contribute to the Mg(2+) site. Residues Ser-609 to Leu-697 enclose the FDX-ACB domain.

It belongs to the phenylalanyl-tRNA synthetase beta subunit family. Type 1 subfamily. In terms of assembly, tetramer of two alpha and two beta subunits. Mg(2+) is required as a cofactor.

The protein localises to the plastid. It localises to the chloroplast. It catalyses the reaction tRNA(Phe) + L-phenylalanine + ATP = L-phenylalanyl-tRNA(Phe) + AMP + diphosphate + H(+). This is Phenylalanine--tRNA ligase beta subunit, chloroplastic from Gracilaria tenuistipitata var. liui (Red alga).